Reading from the N-terminus, the 453-residue chain is Tryptophan dimethylallyltransferase cnsF (453 aa).

L-tryptophan contacts are provided by residues 84 to 85 (IL) and E93. Residues R104, K190, and Y192 each contribute to the substrate site. Residues Y194 and R248 each coordinate L-tryptophan. Residues R261, K263, Y265, Q347, and Y349 each coordinate substrate.

This sequence belongs to the tryptophan dimethylallyltransferase family. Homodimer.

It carries out the reaction L-tryptophan + dimethylallyl diphosphate = 4-(3-methylbut-2-enyl)-L-tryptophan + diphosphate. It participates in alkaloid biosynthesis. Its function is as follows. Tryptophan dimethylallyltransferase; part of the gene cluster that mediates the biosynthesis of communesins, a prominent class of indole alkaloids with great potential as pharmaceuticals. Communesins are biosynthesized by the coupling of tryptamine and aurantioclavine, two building blocks derived from L-tryptophan. The L-tryptophan decarboxylase cnsB converts L-tryptophan to tryptamine, whereas the tryptophan dimethylallyltransferase cnsF converts L-tryptophan to 4-dimethylallyl tryptophan which is further transformed to aurantioclavine by the aurantioclavine synthase cnsA, probably aided by the catalase cnsD. The cytochrome P450 monooxygenase cnsC catalyzes the heterodimeric coupling between the two different indole moieties, tryptamine and aurantioclavine, to construct vicinal quaternary stereocenters and yield the heptacyclic communesin scaffold. The O-methyltransferase cnsE then methylates the communesin scaffold to produce communesin K, the simplest characterized communesin that contains the heptacyclic core. The dioxygenase cnsJ converts communesin K into communesin I. Acylation to introduce the hexadienyl group at position N16 of communesin I by the acyltransferase cnsK leads to the production of communesin B. The hexadienyl group is produced by the highly reducing polyketide synthase cnsI, before being hydrolytically removed from cnsI by the serine hydrolase cnsH, converted into hexadienyl-CoA by the CoA ligase cnsG, and then transferred to communesin I by cnsK. Surprisingly, cnsK may also be a promiscuous acyltransferase that can tolerate a range of acyl groups, including acetyl-, propionyl-, and butyryl-CoA, which lead to communesins A, G and H respectively. The roles of the alpha-ketoglutarate-dependent dioxygenases cnsM and cnsP have still to be determined. This Penicillium expansum (Blue mold rot fungus) protein is Tryptophan dimethylallyltransferase cnsF.